The sequence spans 591 residues: V-type ATP synthase alpha chain (591 aa).

231–238 (GPFGSGKT) serves as a coordination point for ATP.

The protein belongs to the ATPase alpha/beta chains family.

It catalyses the reaction ATP + H2O + 4 H(+)(in) = ADP + phosphate + 5 H(+)(out). Produces ATP from ADP in the presence of a proton gradient across the membrane. The V-type alpha chain is a catalytic subunit. The chain is V-type ATP synthase alpha chain from Clostridium novyi (strain NT).